The primary structure comprises 375 residues: UDP-N-acetylglucosamine--N-acetylmuramyl-(pentapeptide) pyrophosphoryl-undecaprenol N-acetylglucosamine transferase (375 aa).

UDP-N-acetyl-alpha-D-glucosamine contacts are provided by residues 15–17 (TGG), N126, R169, S197, and Q298.

Belongs to the glycosyltransferase 28 family. MurG subfamily.

The protein resides in the cell inner membrane. It catalyses the reaction di-trans,octa-cis-undecaprenyl diphospho-N-acetyl-alpha-D-muramoyl-L-alanyl-D-glutamyl-meso-2,6-diaminopimeloyl-D-alanyl-D-alanine + UDP-N-acetyl-alpha-D-glucosamine = di-trans,octa-cis-undecaprenyl diphospho-[N-acetyl-alpha-D-glucosaminyl-(1-&gt;4)]-N-acetyl-alpha-D-muramoyl-L-alanyl-D-glutamyl-meso-2,6-diaminopimeloyl-D-alanyl-D-alanine + UDP + H(+). Its pathway is cell wall biogenesis; peptidoglycan biosynthesis. Its function is as follows. Cell wall formation. Catalyzes the transfer of a GlcNAc subunit on undecaprenyl-pyrophosphoryl-MurNAc-pentapeptide (lipid intermediate I) to form undecaprenyl-pyrophosphoryl-MurNAc-(pentapeptide)GlcNAc (lipid intermediate II). This Rhodopseudomonas palustris (strain BisB18) protein is UDP-N-acetylglucosamine--N-acetylmuramyl-(pentapeptide) pyrophosphoryl-undecaprenol N-acetylglucosamine transferase.